Consider the following 177-residue polypeptide: Putative thioredoxin peroxidase (177 aa).

Residues 1–158 (MFPKTLTDSK…IIRLIDAITF (158 aa)) enclose the Thioredoxin domain. Catalysis depends on Cys45, which acts as the Cysteine sulfenic acid (-SOH) intermediate.

Belongs to the peroxiredoxin family. AhpC/Prx1 subfamily. In terms of assembly, homodimer; disulfide-linked, upon oxidation.

It carries out the reaction a hydroperoxide + [thioredoxin]-dithiol = an alcohol + [thioredoxin]-disulfide + H2O. Functionally, thiol-specific peroxidase that catalyzes the reduction of hydrogen peroxide and organic hydroperoxides to water and alcohols, respectively. Plays a role in cell protection against oxidative stress by detoxifying peroxides and as sensor of hydrogen peroxide-mediated signaling events. In Encephalitozoon cuniculi (strain GB-M1) (Microsporidian parasite), this protein is Putative thioredoxin peroxidase.